The following is a 410-amino-acid chain: UDP-N-acetylglucosamine--N-acetylmuramyl-(pentapeptide) pyrophosphoryl-undecaprenol N-acetylglucosamine transferase (410 aa).

The tract at residues 1-35 is disordered; that stretch reads MKDTVSQPAGGRGATAPRPADAASPSCGSSPSADS. Residues 14-35 are compositionally biased toward low complexity; it reads ATAPRPADAASPSCGSSPSADS. Residues 45 to 47, Asn-167, Arg-204, Ser-238, and Gln-334 contribute to the UDP-N-acetyl-alpha-D-glucosamine site; that span reads TAG.

It belongs to the glycosyltransferase 28 family. MurG subfamily.

It is found in the cell membrane. It catalyses the reaction di-trans,octa-cis-undecaprenyl diphospho-N-acetyl-alpha-D-muramoyl-L-alanyl-D-glutamyl-meso-2,6-diaminopimeloyl-D-alanyl-D-alanine + UDP-N-acetyl-alpha-D-glucosamine = di-trans,octa-cis-undecaprenyl diphospho-[N-acetyl-alpha-D-glucosaminyl-(1-&gt;4)]-N-acetyl-alpha-D-muramoyl-L-alanyl-D-glutamyl-meso-2,6-diaminopimeloyl-D-alanyl-D-alanine + UDP + H(+). The protein operates within cell wall biogenesis; peptidoglycan biosynthesis. Its function is as follows. Cell wall formation. Catalyzes the transfer of a GlcNAc subunit on undecaprenyl-pyrophosphoryl-MurNAc-pentapeptide (lipid intermediate I) to form undecaprenyl-pyrophosphoryl-MurNAc-(pentapeptide)GlcNAc (lipid intermediate II). This Mycobacterium tuberculosis (strain ATCC 25177 / H37Ra) protein is UDP-N-acetylglucosamine--N-acetylmuramyl-(pentapeptide) pyrophosphoryl-undecaprenol N-acetylglucosamine transferase.